The following is a 306-amino-acid chain: Protein FdhE homolog (306 aa).

It belongs to the FdhE family.

It is found in the cytoplasm. Its function is as follows. Necessary for formate dehydrogenase activity. This is Protein FdhE homolog from Proteus mirabilis (strain HI4320).